Reading from the N-terminus, the 252-residue chain is Acyltransferase PGAP2 (252 aa).

Residues 1-22 are Cytoplasmic-facing; that stretch reads MVPVGPERGANSLFSLRFTTFA. The chain crosses the membrane as a helical span at residues 23-43; it reads VGTVSLPLFAFLFCIVWSLLF. Residues 44–77 are Lumenal-facing; the sequence is NFSETTATHCHVPNYLPSVSAAIGGETPQRYIWR. A helical membrane pass occupies residues 78-98; that stretch reads LCIGLHSAPRFLVGVAYLHYY. The Cytoplasmic portion of the chain corresponds to 99–111; it reads QGTPCSSPAYPRL. Residues 112-132 form a helical membrane-spanning segment; that stretch reads CHLNFLLNCCEIFFLILLTYV. The Lumenal segment spans residues 133–142; sequence SSSENYEVHK. A helical membrane pass occupies residues 143–163; sequence LGFMAFMLFSVGYMFVTCSLW. The Cytoplasmic segment spans residues 164–184; it reads RVARKGSGSLEERTSYAWKKR. Residues 185–205 traverse the membrane as a helical segment; sequence LFGFYLLMFLSSILVYIWHNM. The Lumenal segment spans residues 206-208; it reads YCE. A helical transmembrane segment spans residues 209 to 229; that stretch reads AGVYTVFALLEYLVVLSNMGF. The Cytoplasmic portion of the chain corresponds to 230–252; it reads HMTAWWDFGNKELMICSPGDKRI.

The protein belongs to the PGAP2 family.

It localises to the golgi apparatus membrane. Functionally, involved in the fatty acid remodeling steps of GPI-anchor maturation where the unsaturated acyl chain at sn-2 of inositol phosphate is replaced by a saturated stearoyl chain. May catalyze the second step of the fatty acid remodeling, by reacylating a lyso-GPI intermediate at sn-2 of inositol phosphate by a saturated chain. The fatty acid remodeling steps is critical for the integration of GPI-APs into lipid rafts. The sequence is that of Acyltransferase PGAP2 from Xenopus tropicalis (Western clawed frog).